We begin with the raw amino-acid sequence, 577 residues long: Sensory neuron membrane protein 2 (577 aa).

Topologically, residues 1 to 6 are cytoplasmic; that stretch reads MVQCTL. Residues 7 to 27 form a helical membrane-spanning segment; sequence IWAGIGAMMAVSGALLGWVVF. The Extracellular segment spans residues 28–519; that stretch reads PRAVHEKVIE…LMKVLSLLDV (492 aa). 4 N-linked (GlcNAc...) asparagine glycosylation sites follow: Asn66, Asn161, Asn271, and Asn307. 3 disulfide bridges follow: Cys316–Cys384, Cys345–Cys411, and Cys386–Cys400. Residues 520–540 traverse the membrane as a helical segment; sequence VQWVLIGVGLLLAVLMPTVYF. The Cytoplasmic segment spans residues 541–577; sequence VKRCRGEGSRTVSPAVTATTSAASLSTVAGVTGDRSK.

The protein belongs to the CD36 family.

It localises to the cell membrane. Plays an olfactory role that is not restricted to pheromone sensitivity. The protein is Sensory neuron membrane protein 2 of Anopheles gambiae (African malaria mosquito).